A 55-amino-acid polypeptide reads, in one-letter code: Protein CADMIUM TOLERANCE 1 (55 aa).

Residues 24 to 40 form a helical membrane-spanning segment; sequence GCLYACIFTALCCFCCY.

Belongs to the CYSTM1 family.

The protein resides in the cell membrane. It localises to the secreted. It is found in the cell wall. In terms of biological role, confers resistance to heavy metal ions (e.g. cadmium (CdCl(2)) and copper (CuCl(2))) by chelating them at the plasma membrane of root cells, thus stopping their entry and reducing their accumulation. Binds to aluminium (Al). The polypeptide is Protein CADMIUM TOLERANCE 1 (Oryza sativa subsp. indica (Rice)).